The following is a 206-amino-acid chain: MREAVSKTTTVGLVTGDYVVLAADKRATAGPMVYHKAVKKISKITDYAALTISGLVADAQYIVENARYIAREYEIEMGGPIPIKALASRISLILSVYLRYSPFIVQLLLGGRDSTGASLYYMDLYGSVTREKYMATGSGSPVAFGILEKNYRSDLSLEEAKKLAFNAVSSAIMRDGFSGEGVDIVVIGPGIYSEETIPLKKTIESS.

The propeptide at 1 to 7 is removed in mature form; by autocatalysis; it reads MREAVSK. Thr8 (nucleophile) is an active-site residue.

This sequence belongs to the peptidase T1B family. In terms of assembly, the 20S proteasome core is composed of 14 alpha and 14 beta subunits that assemble into four stacked heptameric rings, resulting in a barrel-shaped structure. The two inner rings, each composed of seven catalytic beta subunits, are sandwiched by two outer rings, each composed of seven alpha subunits. The catalytic chamber with the active sites is on the inside of the barrel. Has a gated structure, the ends of the cylinder being occluded by the N-termini of the alpha-subunits. Is capped at one or both ends by the proteasome regulatory ATPase, PAN.

Its subcellular location is the cytoplasm. The enzyme catalyses Cleavage of peptide bonds with very broad specificity.. The formation of the proteasomal ATPase PAN-20S proteasome complex, via the docking of the C-termini of PAN into the intersubunit pockets in the alpha-rings, triggers opening of the gate for substrate entry. Interconversion between the open-gate and close-gate conformations leads to a dynamic regulation of the 20S proteasome proteolysis activity. Functionally, component of the proteasome core, a large protease complex with broad specificity involved in protein degradation. The chain is Proteasome subunit beta 2 from Desulfurococcus amylolyticus (strain DSM 18924 / JCM 16383 / VKM B-2413 / 1221n) (Desulfurococcus kamchatkensis).